We begin with the raw amino-acid sequence, 827 residues long: Protein arginine N-methyltransferase 9 (827 aa).

2 TPR repeats span residues 54–87 (QYSLFKWAEELYALNRSQDLFNCYEQALELFPID) and 88–121 (DVICNSMGEHLFRLGFRDEAAGYFYKALKLNPSS). 2 SAM-dependent MTase PRMT-type domains span residues 124-453 (AKEN…YLRL) and 511-827 (NAVY…RPLQ).

The protein belongs to the class I-like SAM-binding methyltransferase superfamily. Protein arginine N-methyltransferase family.

It is found in the cytoplasm. It carries out the reaction L-arginyl-[protein] + 2 S-adenosyl-L-methionine = N(omega),N(omega)'-dimethyl-L-arginyl-[protein] + 2 S-adenosyl-L-homocysteine + 2 H(+). Arginine methyltransferase that can both catalyze the formation of omega-N monomethylarginine (MMA) and symmetrical dimethylarginine (sDMA). This chain is Protein arginine N-methyltransferase 9 (prmt9), found in Xenopus laevis (African clawed frog).